The chain runs to 579 residues: ATP-dependent RNA helicase SUV3, mitochondrial (579 aa).

The N-terminal 59 residues, 1 to 59 (MAVAAALLRRRALYSALASPSWLHDTSSCYICSISGTHSLVNHPNLRLQRGYHNSGKFD), are a transit peptide targeting the mitochondrion. The Helicase ATP-binding domain occupies 72-213 (NAREKKRNVF…QRILEPTGDV (142 aa)). 85–92 (GPTNSGKT) contacts ATP. Positions 214 to 388 (VTVQYYERLS…GLFPTFDVLS (175 aa)) constitute a Helicase C-terminal domain. An N-linked (GlcNAc...) asparagine glycan is attached at Asn309.

Belongs to the helicase family. In terms of assembly, homodimer; in free form. Component of the mitochondrial degradosome (mtEXO) complex which is a heteropentamer containing 2 copies of SUPV3L1 and 3 copies of PNPT1. The cofactor is Mg(2+). Mn(2+) serves as cofactor.

It localises to the nucleus. The protein localises to the mitochondrion matrix. It is found in the mitochondrion nucleoid. It carries out the reaction ATP + H2O = ADP + phosphate + H(+). Its function is as follows. Major helicase player in mitochondrial RNA metabolism. Component of the mitochondrial degradosome (mtEXO) complex, that degrades 3' overhang double-stranded RNA with a 3'-to-5' directionality in an ATP-dependent manner. ATPase and ATP-dependent multisubstrate helicase, able to unwind double-stranded (ds) DNA and RNA, and RNA/DNA heteroduplexes in the 5'-to-3' direction. Plays a role in the RNA surveillance system in mitochondria; regulates the stability of mature mRNAs, the removal of aberrantly formed mRNAs and the rapid degradation of non coding processing intermediates. Confers salinity and drought stress tolerances by maintaining both photosynthesis and antioxidant machinery, probably via an increase in plant hormones levels such as gibberellic acid (GA(3)), the cytokinin zeatin (Z) and indole-3-acetic acid (IAA). This Oryza sativa subsp. japonica (Rice) protein is ATP-dependent RNA helicase SUV3, mitochondrial.